An 84-amino-acid polypeptide reads, in one-letter code: ATP synthase subunit c (84 aa).

2 helical membrane-spanning segments follow: residues 9 to 29 (IIGA…GFAI) and 54 to 74 (IVAG…LLFI).

This sequence belongs to the ATPase C chain family. As to quaternary structure, F-type ATPases have 2 components, F(1) - the catalytic core - and F(0) - the membrane proton channel. F(1) has five subunits: alpha(3), beta(3), gamma(1), delta(1), epsilon(1). F(0) has three main subunits: a(1), b(2) and c(10-14). The alpha and beta chains form an alternating ring which encloses part of the gamma chain. F(1) is attached to F(0) by a central stalk formed by the gamma and epsilon chains, while a peripheral stalk is formed by the delta and b chains.

It is found in the cell inner membrane. Functionally, f(1)F(0) ATP synthase produces ATP from ADP in the presence of a proton or sodium gradient. F-type ATPases consist of two structural domains, F(1) containing the extramembraneous catalytic core and F(0) containing the membrane proton channel, linked together by a central stalk and a peripheral stalk. During catalysis, ATP synthesis in the catalytic domain of F(1) is coupled via a rotary mechanism of the central stalk subunits to proton translocation. Its function is as follows. Key component of the F(0) channel; it plays a direct role in translocation across the membrane. A homomeric c-ring of between 10-14 subunits forms the central stalk rotor element with the F(1) delta and epsilon subunits. This chain is ATP synthase subunit c, found in Haemophilus ducreyi (strain 35000HP / ATCC 700724).